A 404-amino-acid polypeptide reads, in one-letter code: Zinc metalloprotease Rip1 (404 aa).

The helical transmembrane segment at 1–21 (MMFVTGIVLFALAILISVALH) threads the bilayer. A Zn(2+)-binding site is contributed by H21. The active site involves E22. H25 is a Zn(2+) binding site. A helical transmembrane segment spans residues 104–124 (PGMNLAICLVLIYAIALVWGL). Positions 121–203 (VWGLPNLHPP…SVPIVVERDG (83 aa)) constitute a PDZ domain. D202 serves as a coordination point for Zn(2+). Transmembrane regions (helical) follow at residues 313-333 (LWVA…TINL) and 373-393 (LLPA…LTVT).

It belongs to the peptidase M50B family. Requires Zn(2+) as cofactor.

It is found in the cell membrane. Its function is as follows. A probable intramembrane site-2 protease (S2P) that cleaves type-2 transmembrane proteins within their membrane-spanning domains. Cleaves PbpB (PBP3, FtsI); cleavage is inhibited by Wag31-PbpB interaction. Probably also cleaves anti-sigma factors RskA, RslA and RsmA. Regulated intramembrane proteolysis (RIP) occurs when an extracytoplasmic signal (possibly oxidative stress) triggers a concerted proteolytic cascade to transmit information and elicit cellular responses. The membrane-spanning regulatory substrate protein (includes anti-sigma factors RskA, RslA, RsmA, and PbpB in M.tuberculosis) is first cut extracytoplasmically (site-1 protease, S1P), then within the membrane itself (site-2 protease, S2P, this entry), while cytoplasmic proteases finish degrading the regulatory protein, liberating the effector protein (ECF sigma factors SigK, SigL and SigM). This is Zinc metalloprotease Rip1 (rip1) from Mycobacterium bovis (strain BCG / Pasteur 1173P2).